The chain runs to 168 residues: 2-C-methyl-D-erythritol 2,4-cyclodiphosphate synthase (168 aa).

Residues Asp-11 and His-13 each contribute to the a divalent metal cation site. Residues 11–13 and 41–42 each bind 4-CDP-2-C-methyl-D-erythritol 2-phosphate; these read DVH and HS. Residue His-49 coordinates a divalent metal cation. 4-CDP-2-C-methyl-D-erythritol 2-phosphate-binding positions include 63–65, 68–72, 139–142, Phe-146, and Arg-149; these read DIG, FPDTD, and TTTE.

It belongs to the IspF family. As to quaternary structure, homotrimer. It depends on a divalent metal cation as a cofactor.

The enzyme catalyses 4-CDP-2-C-methyl-D-erythritol 2-phosphate = 2-C-methyl-D-erythritol 2,4-cyclic diphosphate + CMP. Its pathway is isoprenoid biosynthesis; isopentenyl diphosphate biosynthesis via DXP pathway; isopentenyl diphosphate from 1-deoxy-D-xylulose 5-phosphate: step 4/6. Involved in the biosynthesis of isopentenyl diphosphate (IPP) and dimethylallyl diphosphate (DMAPP), two major building blocks of isoprenoid compounds. Catalyzes the conversion of 4-diphosphocytidyl-2-C-methyl-D-erythritol 2-phosphate (CDP-ME2P) to 2-C-methyl-D-erythritol 2,4-cyclodiphosphate (ME-CPP) with a corresponding release of cytidine 5-monophosphate (CMP). This Psychrobacter cryohalolentis (strain ATCC BAA-1226 / DSM 17306 / VKM B-2378 / K5) protein is 2-C-methyl-D-erythritol 2,4-cyclodiphosphate synthase.